The sequence spans 1585 residues: uncharacterized protein (1585 aa).

A coiled-coil region spans residues D12–T59. Disordered regions lie at residues P586–R627 and I645–R692. Residues T618–R627 are compositionally biased toward polar residues. Over residues I645–G655 the composition is skewed to basic residues. Over residues N661–V672 the composition is skewed to polar residues. Phosphoserine is present on residues S970 and S972.

The protein to B.subtilis XkdO.

This is an uncharacterized protein from Bacillus subtilis (strain 168).